Consider the following 165-residue polypeptide: NAD(P)H-quinone oxidoreductase subunit J, chloroplastic (165 aa).

It belongs to the complex I 30 kDa subunit family. As to quaternary structure, NDH is composed of at least 16 different subunits, 5 of which are encoded in the nucleus.

It localises to the plastid. It is found in the chloroplast thylakoid membrane. The enzyme catalyses a plastoquinone + NADH + (n+1) H(+)(in) = a plastoquinol + NAD(+) + n H(+)(out). It catalyses the reaction a plastoquinone + NADPH + (n+1) H(+)(in) = a plastoquinol + NADP(+) + n H(+)(out). Its function is as follows. NDH shuttles electrons from NAD(P)H:plastoquinone, via FMN and iron-sulfur (Fe-S) centers, to quinones in the photosynthetic chain and possibly in a chloroplast respiratory chain. The immediate electron acceptor for the enzyme in this species is believed to be plastoquinone. Couples the redox reaction to proton translocation, and thus conserves the redox energy in a proton gradient. In Ipomoea purpurea (Common morning glory), this protein is NAD(P)H-quinone oxidoreductase subunit J, chloroplastic.